The following is a 291-amino-acid chain: Segregation and condensation protein A (291 aa).

Belongs to the ScpA family. As to quaternary structure, component of a cohesin-like complex composed of ScpA, ScpB and the Smc homodimer, in which ScpA and ScpB bind to the head domain of Smc. The presence of the three proteins is required for the association of the complex with DNA.

Its subcellular location is the cytoplasm. Its function is as follows. Participates in chromosomal partition during cell division. May act via the formation of a condensin-like complex containing Smc and ScpB that pull DNA away from mid-cell into both cell halves. The sequence is that of Segregation and condensation protein A from Malacoplasma penetrans (strain HF-2) (Mycoplasma penetrans).